The primary structure comprises 517 residues: Xyloglucan galactosyltransferase XLT2 (517 aa).

A disordered region spans residues 1-31; the sequence is MLPVSNPSSPEHLLKKSRTPDSTTSIDRKNS. At 1–49 the chain is on the cytoplasmic side; it reads MLPVSNPSSPEHLLKKSRTPDSTTSIDRKNSFNSLHSVGNRSSYIAASR. Positions 20 to 31 are enriched in polar residues; sequence PDSTTSIDRKNS. A helical; Signal-anchor for type II membrane protein transmembrane segment spans residues 50 to 70; the sequence is SHCTWLILSLLSLQLILFLTL. Residues 71–517 are Lumenal-facing; it reads RSIPFPHRHI…KEQEKWYKWR (447 aa). 4 N-linked (GlcNAc...) asparagine glycosylation sites follow: Asn-250, Asn-288, Asn-377, and Asn-449.

Belongs to the glycosyltransferase 47 family. Interacts with CSLC4, FUT1, XXT2 and XXT5. In terms of tissue distribution, expressed in roots, hypocotyls, cotyledons, leaves, stems and flowers.

It localises to the golgi apparatus membrane. Functions in xyloglucan synthesis by adding side chains to the xylosylated glucan backbone. Involved in galactosylating hemicellulose xyloglucan (XyG) at the second position of the XXXG motif to form XLXG. Associates with other xyloglucan-synthesizing enzymes to form multiprotein complexes for xyloglucan synthesis in the Golgi. This chain is Xyloglucan galactosyltransferase XLT2, found in Arabidopsis thaliana (Mouse-ear cress).